Here is a 461-residue protein sequence, read N- to C-terminus: D-phenylhydantoinase (461 aa).

Residues histidine 59, histidine 61, and lysine 151 each contribute to the a divalent metal cation site. An N6-carboxylysine modification is found at lysine 151. Tyrosine 156 lines the substrate pocket. Positions 182 and 239 each coordinate a divalent metal cation. Serine 286 is a substrate binding site. Aspartate 313 contacts a divalent metal cation. Asparagine 335 serves as a coordination point for substrate.

It belongs to the metallo-dependent hydrolases superfamily. Hydantoinase/dihydropyrimidinase family. Homotetramer. It depends on a divalent metal cation as a cofactor. Carboxylation allows a single lysine to coordinate two divalent metal cations.

The catalysed reaction is D-5-phenylhydantoin + H2O = N-carbamoyl-D-phenylglycine + H(+). In terms of biological role, catalyzes the stereospecific hydrolysis of the cyclic amide bond of D-hydantoin derivatives with an aromatic side chains at the 5'-position. Has no activity on dihydropyrimidines. The physiological function is unknown. This chain is D-phenylhydantoinase, found in Escherichia coli O81 (strain ED1a).